Reading from the N-terminus, the 294-residue chain is Putative cuticle collagen 145 (294 aa).

Positions 1–30 are cleaved as a signal peptide; the sequence is MEKILVTFSTGAASIAVLAVLFTVPSLYNT. Residues 100–112 are compositionally biased toward pro residues; the sequence is TCPPGPPGPPGQP. Disordered stretches follow at residues 100 to 133 and 148 to 276; these read TCPP…ATFA and PQGP…LPGN. Triple-helical region stretches follow at residues 102–127 and 148–277; these read PPGP…KGDD and PQGP…PGND. 2 stretches are compositionally biased toward low complexity: residues 164–194 and 219–265; these read AGPD…NGQP and APGA…DGQP. Positions 218–276 constitute a Collagen-like domain; sequence GAPGAPGNAGPAGPAGQDGFPGQDGAPGPAGPAGQDGFPGNAGSDGQPGAPGGPGLPGN.

This sequence belongs to the cuticular collagen family. Collagen polypeptide chains are complexed within the cuticle by disulfide bonds and other types of covalent cross-links.

Nematode cuticles are composed largely of collagen-like proteins. The cuticle functions both as an exoskeleton and as a barrier to protect the worm from its environment. This chain is Putative cuticle collagen 145 (col-145), found in Caenorhabditis elegans.